Consider the following 523-residue polypeptide: Dynein regulatory complex subunit 3 (523 aa).

LRR repeat units lie at residues Asp44–Glu65, Asn66–Ile87, His88–Val109, Asn110–Val131, and Lys132–Arg153. An LRRCT domain is found at Asn166 to Lys204. Coiled-coil stretches lie at residues Lys204–Glu242 and Leu333–Leu393.

Belongs to the DRC3 family. In terms of assembly, component of the nexin-dynein regulatory complex (N-DRC). Interacts with DRC1. Interacts with TCTE1/DRC5. Interacts with DRC7.

The protein resides in the cytoplasm. It is found in the cytoskeleton. Its subcellular location is the cilium axoneme. It localises to the cell projection. The protein localises to the cilium. The protein resides in the flagellum axoneme. It is found in the flagellum. In terms of biological role, component of the nexin-dynein regulatory complex (N-DRC) a key regulator of ciliary/flagellar motility which maintains the alignment and integrity of the distal axoneme and regulates microtubule sliding in motile axonemes. This is Dynein regulatory complex subunit 3 (Drc3) from Mus musculus (Mouse).